The sequence spans 324 residues: Interleukin-12 subunit beta (324 aa).

Residues 1–22 (MHLQQLVVSWFSLVWLASPIVA) form the signal peptide. One can recognise an Ig-like C2-type domain in the interval 23 to 106 (IWELEKNVYV…LSQSLLLLHK (84 aa)). A disulfide bond links C50 and C90. Residues N125, N135, and N218 are each glycosylated (N-linked (GlcNAc...) asparagine). One can recognise a Fibronectin type-III domain in the interval 233-324 (PPKNLQLNPL…WSEWASVSCN (92 aa)).

This sequence belongs to the IL-12B family. As to quaternary structure, heterodimer with IL12A; disulfide-linked. The heterodimer is known as interleukin IL-12. Heterodimer with IL23A; disulfide-linked. The heterodimer is known as interleukin IL-23. Also secreted as a monomer. Interacts with NBR1; this interaction promotes IL-12 secretion.

It is found in the secreted. Its function is as follows. Cytokine that can act as a growth factor for activated T and NK cells, enhance the lytic activity of NK/lymphokine-activated killer cells, and stimulate the production of IFN-gamma by resting PBMC. Associates with IL23A to form the IL-23 interleukin, a heterodimeric cytokine which functions in innate and adaptive immunity. IL-23 may constitute with IL-17 an acute response to infection in peripheral tissues. IL-23 binds to a heterodimeric receptor complex composed of IL12RB1 and IL23R, activates the Jak-Stat signaling cascade, stimulates memory rather than naive T-cells and promotes production of pro-inflammatory cytokines. IL-23 induces autoimmune inflammation and thus may be responsible for autoimmune inflammatory diseases and may be important for tumorigenesis. This chain is Interleukin-12 subunit beta (IL12B), found in Sus scrofa (Pig).